Consider the following 250-residue polypeptide: MKPTMALKPLVFALAALMAVAAQAGPAEKWKPTPAPTGTVAAAVTDTQVSKDNKFDDTKTLNNAGANGSLSNSKGNLGANIAAGSGNQQDNAAAITSSAGDAATVFAVADIYQESKDNKFTNKGTQNNALLNNSANNSSGNVGVNVAAGQGNQQKNNLAIVTADGKNVAAASNTEQVSLDNHFLNEASSKHSYKPQYVVNNAGLLNSANNASGNIGVNVAAGAGNQQSNTLTLGSGCTVCAAGTGSKLAF.

A signal peptide spans 1-24 (MKPTMALKPLVFALAALMAVAAQA). The FapC_R1 repeat unit spans residues 62–95 (NNAGANGSLSNSKGNLGANIAAGSGNQQDNAAAI). The segment at 96-126 (TSSAGDAATVFAVADIYQESKDNKFTNKGTQ) is linker 1. A FapC_R2 repeat occupies 127–160 (NNALLNNSANNSSGNVGVNVAAGQGNQQKNNLAI). Residues 161-199 (VTADGKNVAAASNTEQVSLDNHFLNEASSKHSYKPQYVV) form a linker 2 region. The stretch at 200–233 (NNAGLLNSANNASGNIGVNVAAGAGNQQSNTLTL) is one FapC_R3 repeat. Residues 237–240 (CTVC) carry the Cys-X-X-Cys motif.

It belongs to the FapB/FapC family. As to quaternary structure, the major component of purified amyloid fibrils. Forms fibrils in vitro; in the presence of FapA the fibrils are about 50% wider. Interacts with FapA. Fibrillates in vitro; this is inhibited by FapA. Fibrils are resistant to boiling in 2% (weight/vol) SDS and require &gt;90% (vol/vol) formic acid to dissolve.

It is found in the fimbrium. It localises to the secreted. In terms of biological role, the major functional amyloid subunit in this bacterium. Intrinsically disordered in its monomeric state. Upon overexpression of the endogenous six-gene locus (fapA-fapF) in situ, cells form large clumps during liquid growth, make large amounts of biofilm and produce amyloid fibrils. Expression of the 6 gene operon in E.coli strain BL21(DE3) induces flocculation and biofilm formation with copious extracellular fibrils. The chain is Functional amyloid subunit FapC from Pseudomonas fluorescens.